The primary structure comprises 688 residues: DNA ligase (688 aa).

Residues Asp-42 to Asp-46, Ser-91 to Leu-92, and Glu-128 contribute to the NAD(+) site. The active-site N6-AMP-lysine intermediate is Lys-130. The NAD(+) site is built by Arg-151, Glu-188, Lys-305, and Lys-329. Zn(2+) contacts are provided by Cys-423, Cys-426, Cys-441, and Cys-447. Residues Ala-608 to Leu-688 form the BRCT domain.

The protein belongs to the NAD-dependent DNA ligase family. LigA subfamily. Mg(2+) is required as a cofactor. The cofactor is Mn(2+).

The enzyme catalyses NAD(+) + (deoxyribonucleotide)n-3'-hydroxyl + 5'-phospho-(deoxyribonucleotide)m = (deoxyribonucleotide)n+m + AMP + beta-nicotinamide D-nucleotide.. In terms of biological role, DNA ligase that catalyzes the formation of phosphodiester linkages between 5'-phosphoryl and 3'-hydroxyl groups in double-stranded DNA using NAD as a coenzyme and as the energy source for the reaction. It is essential for DNA replication and repair of damaged DNA. The protein is DNA ligase of Paraburkholderia phytofirmans (strain DSM 17436 / LMG 22146 / PsJN) (Burkholderia phytofirmans).